A 160-amino-acid chain; its full sequence is Protein-export protein SecB (160 aa).

Belongs to the SecB family. As to quaternary structure, homotetramer, a dimer of dimers. One homotetramer interacts with 1 SecA dimer.

It is found in the cytoplasm. Its function is as follows. One of the proteins required for the normal export of preproteins out of the cell cytoplasm. It is a molecular chaperone that binds to a subset of precursor proteins, maintaining them in a translocation-competent state. It also specifically binds to its receptor SecA. The chain is Protein-export protein SecB from Beijerinckia indica subsp. indica (strain ATCC 9039 / DSM 1715 / NCIMB 8712).